The primary structure comprises 93 residues: Small ribosomal subunit protein bS6 (93 aa).

Belongs to the bacterial ribosomal protein bS6 family.

Functionally, binds together with bS18 to 16S ribosomal RNA. The protein is Small ribosomal subunit protein bS6 of Phytoplasma australiense.